The following is a 577-amino-acid chain: Laccase-17 (577 aa).

The signal sequence occupies residues 1-22 (MALQLLLAVFSCVLLLPQPAFG). 2 consecutive Plastocyanin-like domains span residues 30 to 146 (EIKM…PKRG) and 156 to 309 (KEVP…YEPP). N-linked (GlcNAc...) asparagine glycosylation is found at N35 and N76. H80 and H82 together coordinate Cu cation. N112 carries N-linked (GlcNAc...) asparagine glycosylation. 2 residues coordinate Cu cation: H125 and H127. N185, N201, N237, N297, N335, N383, N391, N401, N437, N444, N450, and N460 each carry an N-linked (GlcNAc...) asparagine glycan. A Plastocyanin-like 3 domain is found at 427 to 561 (KFPWSPIVPF…RMAWLVLDGD (135 aa)). Cu cation contacts are provided by H478, H481, H483, H540, C541, H542, and H546.

It belongs to the multicopper oxidase family. Cu cation serves as cofactor. Ubiquitous with higher levels in the inflorescence stem.

The protein localises to the secreted. Its subcellular location is the extracellular space. The protein resides in the apoplast. It carries out the reaction 4 hydroquinone + O2 = 4 benzosemiquinone + 2 H2O. Lignin degradation and detoxification of lignin-derived products. The chain is Laccase-17 (LAC17) from Arabidopsis thaliana (Mouse-ear cress).